Here is a 786-residue protein sequence, read N- to C-terminus: E3 ubiquitin-protein ligase UHRF1 (786 aa).

One can recognise a Ubiquitin-like domain in the interval 1-78; it reads MWIQVRTMDG…IQLLVRQSLV (78 aa). A phosphoserine mark is found at serine 76, serine 98, and serine 102. The tract at residues 82-134 is disordered; the sequence is PVPSSSGGSKERDSELSDTDSGCGLAQSESDKSSNSGEAANEPEGKADEDECD. 2 tudor-like regions span residues 139–213 and 220–287; these read GLYK…ARAR and DLQV…IERP. Residue lysine 283 forms a Glycyl lysine isopeptide (Lys-Gly) (interchain with G-Cter in SUMO2) linkage. Residues 300–305 form a linker region; that stretch reads RKSGPS. Position 302 is a phosphoserine; by PKA (serine 302). Residues 303-370 form a PHD-type zinc finger; the sequence is GPSCKHCKDD…EWYCPDCRID (68 aa). 2 histone H3R2me0 binding regions span residues 337–341 and 357–359; these read CDECD and PPE. Serine 372 is subject to Phosphoserine. Lysine 389 is covalently cross-linked (Glycyl lysine isopeptide (Lys-Gly) (interchain with G-Cter in SUMO2)). N6-acetyllysine is present on lysine 403. Residues 423–586 form the YDG domain; that stretch reads GPIPGIPVGT…FLVWRFLLRR (164 aa). The tract at residues 449–450 is required to promote base flipping; it reads HV. DNA is bound by residues 467–468 and aspartate 473; that span reads AG. Required for formation of a 5-methylcytosine-binding pocket regions lie at residues 470-473 and 482-485; these read YEDD and YTGS. An N6-acetyllysine; alternate modification is found at lysine 550. Lysine 550 participates in a covalent cross-link: Glycyl lysine isopeptide (Lys-Gly) (interchain with G-Cter in SUMO2); alternate. The interval 626–679 is disordered; sequence NSKQAALDKEEEDGEEGFTSPRKGKRKSKSAGGDGSSRGTPKKTKVEPYSLTTQ. Serine 645 is modified (phosphoserine; by CDK1). Phosphoserine is present on residues serine 655 and serine 662. Lysine 670 is covalently cross-linked (Glycyl lysine isopeptide (Lys-Gly) (interchain with G-Cter in SUMO2)). The segment at 717 to 756 adopts an RING-type zinc-finger fold; it reads CICCQELVFRPITTVCQHNVCKDCLDRSFKAQVFSCPACR.

In terms of assembly, interacts with DNMT3A and DNMT3B. Interacts with DNMT1; the interaction is direct. Interacts with USP7; leading to its deubiquitination. Interacts with histone H3. Interacts with HDAC1, but not with HDAC2. Interacts with BLTP3A. Interacts with PML. Interacts with EHMT2. Binds methylated CpG containing oligonucleotides. Interacts with ZNF263; recruited to the SIX3 promoter along with other proteins involved in chromatin modification and transcriptional corepression where it contributes to transcriptional repression. Interacts with UHRF2. Interacts with FANCD2. Interacts with TET1 isoform 2; this interaction induces the recruitment of TET1 isoform 2 to replicating heterochromatin. Post-translationally, phosphorylation at Ser-302 of the linker region decreases the binding to H3K9me3. Phosphorylation at Ser-645 by CDK1 during M phase impairs interaction with USP7, preventing deubiquitination and leading to degradation by the proteasome. In terms of processing, ubiquitinated; which leads to proteasomal degradation. Autoubiquitinated; interaction with USP7 leads to deubiquitination and prevents degradation. Ubiquitination and degradation takes place during M phase, when phosphorylation at Ser-645 prevents interaction with USP7 and subsequent deubiquitination. Polyubiquitination may be stimulated by DNA damage.

The protein resides in the nucleus. It catalyses the reaction S-ubiquitinyl-[E2 ubiquitin-conjugating enzyme]-L-cysteine + [acceptor protein]-L-lysine = [E2 ubiquitin-conjugating enzyme]-L-cysteine + N(6)-ubiquitinyl-[acceptor protein]-L-lysine.. The protein operates within protein modification; protein ubiquitination. Functionally, multidomain protein that acts as a key epigenetic regulator by bridging DNA methylation and chromatin modification. Specifically recognizes and binds hemimethylated DNA at replication forks via its YDG domain and recruits DNMT1 methyltransferase to ensure faithful propagation of the DNA methylation patterns through DNA replication. In addition to its role in maintenance of DNA methylation, also plays a key role in chromatin modification: through its tudor-like regions and PHD-type zinc fingers, specifically recognizes and binds histone H3 trimethylated at 'Lys-9' (H3K9me3) and unmethylated at 'Arg-2' (H3R2me0), respectively, and recruits chromatin proteins. Enriched in pericentric heterochromatin where it recruits different chromatin modifiers required for this chromatin replication. Also localizes to euchromatic regions where it negatively regulates transcription possibly by impacting DNA methylation and histone modifications. Has E3 ubiquitin-protein ligase activity by mediating the ubiquitination of target proteins such as histone H3 and PML. It is still unclear how E3 ubiquitin-protein ligase activity is related to its role in chromatin in vivo. Plays a role in DNA repair by cooperating with UHRF2 to ensure recruitment of FANCD2 to interstrand cross-links (ICLs) leading to FANCD2 activation. Plays a pivotal role in the establishment of correct spindle architecture by catalyzing the 'Lys-63'-linked ubiquitination of KIF11, thereby controlling KIF11 localization on the spindle. The sequence is that of E3 ubiquitin-protein ligase UHRF1 (UHRF1) from Bos taurus (Bovine).